The following is a 215-amino-acid chain: Orotidine 5'-phosphate decarboxylase (215 aa).

Substrate contacts are provided by residues Asp12, Lys34, 60–69 (DFKVADIPNT), Ser117, 170–180 (PGVGAQGGSAA), Gly193, and Arg194. The Proton donor role is filled by Lys62.

This sequence belongs to the OMP decarboxylase family. Type 1 subfamily. As to quaternary structure, homodimer.

The catalysed reaction is orotidine 5'-phosphate + H(+) = UMP + CO2. Its pathway is pyrimidine metabolism; UMP biosynthesis via de novo pathway; UMP from orotate: step 2/2. Its function is as follows. Catalyzes the decarboxylation of orotidine 5'-monophosphate (OMP) to uridine 5'-monophosphate (UMP). The chain is Orotidine 5'-phosphate decarboxylase from Methanococcoides burtonii (strain DSM 6242 / NBRC 107633 / OCM 468 / ACE-M).